A 170-amino-acid polypeptide reads, in one-letter code: Adenine phosphoribosyltransferase (170 aa).

Belongs to the purine/pyrimidine phosphoribosyltransferase family. As to quaternary structure, homodimer.

It localises to the cytoplasm. It catalyses the reaction AMP + diphosphate = 5-phospho-alpha-D-ribose 1-diphosphate + adenine. It participates in purine metabolism; AMP biosynthesis via salvage pathway; AMP from adenine: step 1/1. Functionally, catalyzes a salvage reaction resulting in the formation of AMP, that is energically less costly than de novo synthesis. This is Adenine phosphoribosyltransferase from Mesoplasma florum (strain ATCC 33453 / NBRC 100688 / NCTC 11704 / L1) (Acholeplasma florum).